We begin with the raw amino-acid sequence, 555 residues long: 2-succinyl-5-enolpyruvyl-6-hydroxy-3-cyclohexene-1-carboxylate synthase (555 aa).

The protein belongs to the TPP enzyme family. MenD subfamily. In terms of assembly, homodimer. It depends on Mg(2+) as a cofactor. Mn(2+) is required as a cofactor. Requires thiamine diphosphate as cofactor.

It carries out the reaction isochorismate + 2-oxoglutarate + H(+) = 5-enolpyruvoyl-6-hydroxy-2-succinyl-cyclohex-3-ene-1-carboxylate + CO2. It participates in quinol/quinone metabolism; 1,4-dihydroxy-2-naphthoate biosynthesis; 1,4-dihydroxy-2-naphthoate from chorismate: step 2/7. The protein operates within quinol/quinone metabolism; menaquinone biosynthesis. In terms of biological role, catalyzes the thiamine diphosphate-dependent decarboxylation of 2-oxoglutarate and the subsequent addition of the resulting succinic semialdehyde-thiamine pyrophosphate anion to isochorismate to yield 2-succinyl-5-enolpyruvyl-6-hydroxy-3-cyclohexene-1-carboxylate (SEPHCHC). The polypeptide is 2-succinyl-5-enolpyruvyl-6-hydroxy-3-cyclohexene-1-carboxylate synthase (Kineococcus radiotolerans (strain ATCC BAA-149 / DSM 14245 / SRS30216)).